Reading from the N-terminus, the 973-residue chain is Translation initiation factor IF-2 (973 aa).

Residues 52-388 (PDQEEVKPAA…QAQKPAQPLE (337 aa)) are disordered. Composition is skewed to basic and acidic residues over residues 83 to 120 (ESRK…DHYK), 128 to 148 (VPSR…DKAR), 157 to 172 (QGAR…ERTR), 186 to 202 (VQQE…RPPF), 210 to 246 (PQHE…DKGA), 272 to 288 (RAGE…ETKP), 314 to 333 (LLDD…EKQK), and 343 to 360 (KSRE…ERLR). Residues 374–386 (AKPQEQAQKPAQP) show a composition bias toward low complexity. A tr-type G domain is found at 472–641 (DRPCVVTVMG…LLVAEMSELK (170 aa)). The interval 481 to 488 (GHVDHGKT) is G1. 481–488 (GHVDHGKT) contacts GTP. A G2 region spans residues 506–510 (GITQH). The G3 stretch occupies residues 527-530 (DTPG). GTP contacts are provided by residues 527–531 (DTPGH) and 581–584 (NKID). The interval 581-584 (NKID) is G4. A G5 region spans residues 617–619 (SAL).

This sequence belongs to the TRAFAC class translation factor GTPase superfamily. Classic translation factor GTPase family. IF-2 subfamily.

The protein localises to the cytoplasm. Its function is as follows. One of the essential components for the initiation of protein synthesis. Protects formylmethionyl-tRNA from spontaneous hydrolysis and promotes its binding to the 30S ribosomal subunits. Also involved in the hydrolysis of GTP during the formation of the 70S ribosomal complex. The polypeptide is Translation initiation factor IF-2 (Pelotomaculum thermopropionicum (strain DSM 13744 / JCM 10971 / SI)).